A 128-amino-acid chain; its full sequence is Large ribosomal subunit protein uL22 (128 aa).

It belongs to the universal ribosomal protein uL22 family. In terms of assembly, part of the 50S ribosomal subunit.

In terms of biological role, this protein binds specifically to 23S rRNA; its binding is stimulated by other ribosomal proteins, e.g. L4, L17, and L20. It is important during the early stages of 50S assembly. It makes multiple contacts with different domains of the 23S rRNA in the assembled 50S subunit and ribosome. The globular domain of the protein is located near the polypeptide exit tunnel on the outside of the subunit, while an extended beta-hairpin is found that lines the wall of the exit tunnel in the center of the 70S ribosome. In Rhodopseudomonas palustris (strain BisB18), this protein is Large ribosomal subunit protein uL22.